The sequence spans 126 residues: Holo-[acyl-carrier-protein] synthase (126 aa).

Mg(2+) is bound by residues Asp-9 and Glu-58.

The protein belongs to the P-Pant transferase superfamily. AcpS family. The cofactor is Mg(2+).

The protein localises to the cytoplasm. The catalysed reaction is apo-[ACP] + CoA = holo-[ACP] + adenosine 3',5'-bisphosphate + H(+). Its function is as follows. Transfers the 4'-phosphopantetheine moiety from coenzyme A to a Ser of acyl-carrier-protein. The chain is Holo-[acyl-carrier-protein] synthase from Escherichia coli (strain K12 / MC4100 / BW2952).